We begin with the raw amino-acid sequence, 530 residues long: Na(+)/H(+) antiporter NhaB (530 aa).

The next 12 helical transmembrane spans lie at 13–33, 98–118, 123–145, 149–166, 205–225, 238–258, 308–328, 330–350, 356–376, 393–413, 451–471, and 480–500; these read FLGK…IINP, LLLV…LFIF, LGIQ…LSAF, LTVI…YSIY, LLMH…VGEP, FGEF…CGIL, IAVW…LIGL, VIIL…GKAF, FTAL…QALF, LALF…VFVG, ATPN…APLI, and IMAL…IVFF.

Belongs to the NhaB Na(+)/H(+) (TC 2.A.34) antiporter family.

The protein resides in the cell inner membrane. The enzyme catalyses 2 Na(+)(in) + 3 H(+)(out) = 2 Na(+)(out) + 3 H(+)(in). In terms of biological role, na(+)/H(+) antiporter that extrudes sodium in exchange for external protons. The sequence is that of Na(+)/H(+) antiporter NhaB from Vibrio atlanticus (strain LGP32) (Vibrio splendidus (strain Mel32)).